Consider the following 383-residue polypeptide: G-protein coupled receptor E1 (383 aa).

Transmembrane regions (helical) follow at residues 13–35, 78–98, 109–129, 160–180, 190–210, 242–262, 279–299, 323–343, and 351–371; these read SSLA…TTIA, LYLL…IIVI, MLLL…PFWM, VFCI…AVTA, IVTC…EFFF, VIML…YVII, LIFV…IVLL, LITK…YAFV, and LYHF…PFLS. An intrachain disulfide couples Cys-145 to Cys-222.

This sequence belongs to the G-protein coupled receptor 1 family.

It localises to the host membrane. This Equine herpesvirus 2 (strain 86/87) (EHV-2) protein is G-protein coupled receptor E1 (E1).